The primary structure comprises 341 residues: MEVTDFDFYLPEELIAQKPLEQRDEGRLMVLDKKTGKVCHKIFKDIVYYLNPGDCVVLNDTRVLPARLIGVREDTMGKIEFLLLKRRDNFTWETLVKPGRRAKVGNRFNFGSGQLKAEVVSINEDGNRIVRFEYNGVFEEILDKLGQIPLPPYIKEKLENKELYQTVYSKEEGSAAAPTAGLHFTEELLRELREKGVNLAFLTLHVGLGTFRPVKVENIEDHAMHSEFYSMSKETADMINAAKESGHSVISVGTTSCRTLETIGDENGRVKEQSGWTDIFIYPGYKYKVVDKLITNFHLPKSTLIMLVSAFYGRENTLHAYNVAVKEKYRFFSFGDAMFIK.

It belongs to the QueA family. As to quaternary structure, monomer.

It is found in the cytoplasm. The catalysed reaction is 7-aminomethyl-7-carbaguanosine(34) in tRNA + S-adenosyl-L-methionine = epoxyqueuosine(34) in tRNA + adenine + L-methionine + 2 H(+). Its pathway is tRNA modification; tRNA-queuosine biosynthesis. Its function is as follows. Transfers and isomerizes the ribose moiety from AdoMet to the 7-aminomethyl group of 7-deazaguanine (preQ1-tRNA) to give epoxyqueuosine (oQ-tRNA). This chain is S-adenosylmethionine:tRNA ribosyltransferase-isomerase, found in Clostridium kluyveri (strain NBRC 12016).